The chain runs to 312 residues: Coiled-coil domain-containing protein 42 homolog (312 aa).

2 coiled-coil regions span residues 34-121 (RLLE…RLKE) and 172-233 (ATHQ…WESQ).

This sequence belongs to the CFAP73 family.

This is Coiled-coil domain-containing protein 42 homolog from Nematostella vectensis (Starlet sea anemone).